Consider the following 238-residue polypeptide: Small ribosomal subunit protein uS2 (238 aa).

This sequence belongs to the universal ribosomal protein uS2 family.

The sequence is that of Small ribosomal subunit protein uS2 from Chloroflexus aurantiacus (strain ATCC 29366 / DSM 635 / J-10-fl).